The following is a 433-amino-acid chain: MSFPKELEKVLEITKAQNVWRRTQTLNLIASENVMSPLAESVYMSDFMSRYAEGKPYKRYYQGTKYTDEIETLAMDLMNEITNSKDCDLRPTSGTIANAAVFRVLAEPGDKALIAPVQAGAHVSHTKFGTLGALGIQHIEMPFDEENINVDVDKAIKMIEEVKPKFVVLGGSLYLFPHPTKELAPHVHAVGAKLVYDAAHVYGLIEGKVWSSPLKEGADIMTVSTHKTFPGPQGGAIFSDGSEVFKQVSRTIFPWFVSNHHLHRLPATAVTAIEMKYFGESYANQITRNSKALAEALAERGFKVIGENLGYTKSHQVAVDVRQFGGGNKIAKLLEDANIIVNKNLLPYDKPENVSDPSGLRIGVQEMTRYGMKESEMEEIAELFKKVIIDKKDINEVKKEVIDMRKNFLEVKYTFDDMKDLEKYSSKSLKLII.

121-123 (AHV) contacts (6S)-5,6,7,8-tetrahydrofolate. N6-(pyridoxal phosphate)lysine is present on Lys-227. Glu-243 is a (6S)-5,6,7,8-tetrahydrofolate binding site.

Belongs to the SHMT family. In terms of assembly, homodimer. Pyridoxal 5'-phosphate serves as cofactor.

The protein resides in the cytoplasm. It participates in amino-acid biosynthesis; glycine biosynthesis; glycine from L-serine: step 1/1. Its function is as follows. Catalyzes the reversible interconversion of serine and glycine with a modified folate serving as the one-carbon carrier. Also exhibits a pteridine-independent aldolase activity toward beta-hydroxyamino acids, producing glycine and aldehydes, via a retro-aldol mechanism. This chain is Serine hydroxymethyltransferase, found in Saccharolobus islandicus (strain Y.G.57.14 / Yellowstone #1) (Sulfolobus islandicus).